Here is a 148-residue protein sequence, read N- to C-terminus: SPbeta prophage-derived disulfide bond formation protein B (148 aa).

Residues Lys7–Phe26 form a helical membrane-spanning segment. Cys36 and Cys39 form a disulfide bridge. 2 consecutive transmembrane segments (helical) span residues Tyr41–Lys60 and Tyr67–Ile84. Cysteines 95 and 102 form a disulfide. Residues Gly111 to Ile135 traverse the membrane as a helical segment.

This sequence belongs to the DsbB family. BdbC subfamily.

The protein localises to the cell membrane. Its function is as follows. Important but not absolutely essential for the production of the lantibiotic sublancin 168, it may also be required for the stability of other secreted proteins. Not required for competence for DNA uptake. The polypeptide is SPbeta prophage-derived disulfide bond formation protein B (bdbB) (Bacillus subtilis (strain 168)).